The primary structure comprises 132 residues: Small ribosomal subunit protein uS9 (132 aa).

Residues 104–132 (GYLTRDPRMKERKKYGLRKARRAPQFSKR) form a disordered region. A compositionally biased stretch (basic residues) spans 113 to 132 (KERKKYGLRKARRAPQFSKR).

The protein belongs to the universal ribosomal protein uS9 family.

The sequence is that of Small ribosomal subunit protein uS9 from Natranaerobius thermophilus (strain ATCC BAA-1301 / DSM 18059 / JW/NM-WN-LF).